We begin with the raw amino-acid sequence, 259 residues long: UPF0246 protein VFMJ11_2214 (259 aa).

It belongs to the UPF0246 family.

In Aliivibrio fischeri (strain MJ11) (Vibrio fischeri), this protein is UPF0246 protein VFMJ11_2214.